A 253-amino-acid polypeptide reads, in one-letter code: PAXIP1-associated glutamate-rich protein 1A (253 aa).

2 disordered regions span residues 1–108 (MSLA…MPPP) and 126–253 (LQAE…QRKY). Positions 45–66 (KAEEEGKGSQEEAGREGSRPEE) are enriched in basic and acidic residues. The interval 115 to 159 (YELLATQGTLELQAEILPRRPPTPEAQSEEERSDEEPEAKEEEEE) is sufficient for interaction with NCOA1. Residue Thr137 is modified to Phosphothreonine. A compositionally biased stretch (acidic residues) spans 141-158 (QSEEERSDEEPEAKEEEE). Residues Ser142 and Ser147 each carry the phosphoserine modification. The interval 160 to 253 (KPHMPTEFDF…NSLFPRQRKY (94 aa)) is sufficient for interaction with ESR1. The segment covering 194–222 (QKREARLDKVLSDMKRHKKLEEQILRTGR) has biased composition (basic and acidic residues). Ser236 bears the Phosphoserine mark. Polar residues predominate over residues 238 to 247 (PLRSSGNSLF).

In terms of assembly, component of the KMT2 family MLL2/MLL3 complex, at least composed of the histone methyltransferases KMT2D and/or KMT2C, the common subunits ASH2L, RBBP5, WDR5 and DPY30, and the complex type-specific subunits PAXIP1/PTIP, PAGR1, NCOA6 and KDM6A; PAXIP1 is required for the association with the MLL2/MLL3 complex. Forms a constitutive complex with PAXIP1/PTIP independently of the MLL2/MLL3 complex. Interacts with NCOA1, ESR1, NR3C1, AR.

It localises to the nucleus. Functionally, its association with the histone methyltransferase MLL2/MLL3 complex is suggesting a role in epigenetic transcriptional activation. However, in association with PAXIP1/PTIP is proposed to function at least in part independently of the MLL2/MLL3 complex. Proposed to be recruited by PAXIP1 to sites of DNA damage where the PAGR1:PAXIP1 complex is required for cell survival in response to DNA damage independently of the MLL2/MLL3 complex. However, its function in DNA damage has been questioned. During immunoglobulin class switching in activated B-cells is involved in transcription regulation of downstream switch regions at the immunoglobulin heavy-chain (Igh) locus independently of the MLL2/MLL3 complex. Involved in both estrogen receptor-regulated gene transcription and estrogen-stimulated G1/S cell-cycle transition. Acts as a transcriptional cofactor for nuclear hormone receptors. Inhibits the induction properties of several steroid receptors such as NR3C1, AR and PPARG; the mechanism of inhibition appears to be gene-dependent. May be involved in the regulation of the BMP pathway in extraembryonic development. The chain is PAXIP1-associated glutamate-rich protein 1A from Mus musculus (Mouse).